Here is a 1141-residue protein sequence, read N- to C-terminus: Sterol regulatory element-binding protein 2 (1141 aa).

The tract at residues 1-50 (MDDSGELGGLETMETLTELGDELTLGDIDEMLQFVSNQVGEFPDLFSEQL) is transcriptional activation (acidic). At 1–479 (MDDSGELGGL…PPVALGMVDR (479 aa)) the chain is on the cytoplasmic side. The segment at 48–144 (EQLCSSFPGS…PQPQPQPQTQ (97 aa)) is disordered. A compositionally biased stretch (low complexity) spans 63 to 82 (SSGSSGSSSSSSNGRGSSSG). A compositionally biased stretch (polar residues) spans 88 to 97 (VQRSFTQVTL). Low complexity predominate over residues 98 to 110 (PSFSPSAASPQAP). A compositionally biased stretch (polar residues) spans 114–126 (VKVSPTSVPTTPR). The interval 237–491 (QQVPVLVQPQ…ILLCVLTFLC (255 aa)) is interaction with LMNA. Residues 330 to 380 (ERRTTHNIIEKRYRSSINDKIIELKDLVMGTDAKMHKSGVLRKAIDYIKYL) enclose the bHLH domain. The tract at residues 380 to 401 (LQQVNHKLRQENMVLKLANQKN) is leucine-zipper. Residue Lys464 forms a Glycyl lysine isopeptide (Lys-Gly) (interchain with G-Cter in SUMO2) linkage. A helical membrane pass occupies residues 480-500 (SRILLCVLTFLCLSFNPLTSL). Residues 501 to 533 (LQWGGAHDSDQHPHSGSGRSVLSFESGSGGWFD) are Lumenal-facing. The chain crosses the membrane as a helical span at residues 534–554 (WMMPTLLLWLVNGVIVLSVFV). Over 555–1139 (KLLVHGEPVI…VKLGGGTAIA (585 aa)) the chain is Cytoplasmic. 2 positions are modified to phosphoserine: Ser855 and Ser1098.

This sequence belongs to the SREBP family. As to quaternary structure, forms a tight complex with SCAP, the SCAP-SREBP complex, in the endoplasmic reticulum membrane and the Golgi apparatus. Interacts with PAQR3; the interaction anchors the SCAP-SREBP complex to the Golgi apparatus in low cholesterol conditions. Interacts (via C-terminal domain) with RNF139. Homodimer; efficient DNA binding of the soluble transcription factor fragment requires dimerization with another bHLH protein. Interacts with LMNA. Processed in the Golgi apparatus, releasing the protein from the membrane. At low cholesterol the SCAP-SREBP complex is recruited into COPII vesicles for export from the endoplasmic reticulum. In the Golgi, complex SREBPs are cleaved sequentially by site-1 (MBTPS1, S1P) and site-2 (MBTPS2, S2P) protease. The first cleavage by site-1 protease occurs within the luminal loop, the second cleavage by site-2 protease occurs within the first transmembrane domain, releasing the transcription factor from the Golgi membrane. Apoptosis triggers cleavage by the cysteine proteases caspase-3 and caspase-7. Cleavage and activation is induced by mediated cholesterol efflux. Post-translationally, phosphorylated by AMPK, leading to suppress protein processing and nuclear translocation, and repress target gene expression. In terms of processing, SCAP-free SREBF2 is ubiquitinated by the BCR(ARMC5) complex, leading to its degradation. Ubiquitinated; the nuclear form has a rapid turnover and is rapidly ubiquitinated and degraded by the proteasome in the nucleus. In terms of tissue distribution, ubiquitously expressed in adult and fetal tissues.

It localises to the endoplasmic reticulum membrane. The protein localises to the golgi apparatus membrane. It is found in the cytoplasmic vesicle. The protein resides in the COPII-coated vesicle membrane. Its subcellular location is the nucleus. With respect to regulation, activation by cleavage is down-regulated upon activation of SIRT3-dependent PRKAA1/AMPK-alpha signaling cascade which leads to inhibition of ATP-consuming lipogenesis to restore cellular energy balance. Functionally, precursor of the transcription factor form (Processed sterol regulatory element-binding protein 2), which is embedded in the endoplasmic reticulum membrane. Low sterol concentrations promote processing of this form, releasing the transcription factor form that translocates into the nucleus and activates transcription of genes involved in cholesterol biosynthesis. Its function is as follows. Key transcription factor that regulates expression of genes involved in cholesterol biosynthesis. Binds to the sterol regulatory element 1 (SRE-1) (5'-ATCACCCCAC-3'). Has dual sequence specificity binding to both an E-box motif (5'-ATCACGTGA-3') and to SRE-1 (5'-ATCACCCCAC-3'). Regulates transcription of genes related to cholesterol synthesis pathway. This is Sterol regulatory element-binding protein 2 from Homo sapiens (Human).